A 156-amino-acid chain; its full sequence is SsrA-binding protein (156 aa).

It belongs to the SmpB family.

It localises to the cytoplasm. In terms of biological role, required for rescue of stalled ribosomes mediated by trans-translation. Binds to transfer-messenger RNA (tmRNA), required for stable association of tmRNA with ribosomes. tmRNA and SmpB together mimic tRNA shape, replacing the anticodon stem-loop with SmpB. tmRNA is encoded by the ssrA gene; the 2 termini fold to resemble tRNA(Ala) and it encodes a 'tag peptide', a short internal open reading frame. During trans-translation Ala-aminoacylated tmRNA acts like a tRNA, entering the A-site of stalled ribosomes, displacing the stalled mRNA. The ribosome then switches to translate the ORF on the tmRNA; the nascent peptide is terminated with the 'tag peptide' encoded by the tmRNA and targeted for degradation. The ribosome is freed to recommence translation, which seems to be the essential function of trans-translation. The polypeptide is SsrA-binding protein (Clostridium tetani (strain Massachusetts / E88)).